A 2276-amino-acid chain; its full sequence is Protein Ycf2 (2276 aa).

Gly1621 to Ser1628 serves as a coordination point for ATP.

It belongs to the Ycf2 family.

Its subcellular location is the plastid. It is found in the chloroplast stroma. Its function is as follows. Probable ATPase of unknown function. Its presence in a non-photosynthetic plant (Epifagus virginiana) and experiments in tobacco indicate that it has an essential function which is probably not related to photosynthesis. The chain is Protein Ycf2 from Guizotia abyssinica (Niger).